We begin with the raw amino-acid sequence, 313 residues long: tRNA dimethylallyltransferase (313 aa).

11-18 (GPTASGKT) provides a ligand contact to ATP. Substrate is bound at residue 13-18 (TASGKT). Interaction with substrate tRNA stretches follow at residues 36–39 (DSRQ) and 160–164 (QRLIR).

The protein belongs to the IPP transferase family. In terms of assembly, monomer. It depends on Mg(2+) as a cofactor.

It carries out the reaction adenosine(37) in tRNA + dimethylallyl diphosphate = N(6)-dimethylallyladenosine(37) in tRNA + diphosphate. Its function is as follows. Catalyzes the transfer of a dimethylallyl group onto the adenine at position 37 in tRNAs that read codons beginning with uridine, leading to the formation of N6-(dimethylallyl)adenosine (i(6)A). This chain is tRNA dimethylallyltransferase, found in Chlorobaculum parvum (strain DSM 263 / NCIMB 8327) (Chlorobium vibrioforme subsp. thiosulfatophilum).